The primary structure comprises 262 residues: 4-hydroxy-2-oxo-heptane-1,7-dioate aldolase (262 aa).

Catalysis depends on H45, which acts as the Proton acceptor. Residue Q147 participates in substrate binding. E149 is a binding site for a divalent metal cation. Residues A174 and D175 each coordinate substrate. A divalent metal cation is bound at residue D175.

The protein belongs to the HpcH/HpaI aldolase family. Homohexamer; trimer of dimers. The cofactor is a divalent metal cation.

It catalyses the reaction 4-hydroxy-2-oxoheptanedioate = succinate semialdehyde + pyruvate. The protein operates within aromatic compound metabolism; 4-hydroxyphenylacetate degradation; pyruvate and succinate semialdehyde from 4-hydroxyphenylacetate: step 7/7. Its function is as follows. Catalyzes the reversible retro-aldol cleavage of 4-hydroxy-2-ketoheptane-1,7-dioate (HKHD) to pyruvate and succinic semialdehyde. This Shigella boydii serotype 18 (strain CDC 3083-94 / BS512) protein is 4-hydroxy-2-oxo-heptane-1,7-dioate aldolase.